Reading from the N-terminus, the 510-residue chain is NAD(P)H-quinone oxidoreductase subunit 2, chloroplastic (510 aa).

The next 13 membrane-spanning stretches (helical) occupy residues 28 to 48, 57 to 77, 99 to 119, 124 to 144, 149 to 169, 183 to 203, 227 to 247, 295 to 315, 323 to 343, 354 to 374, 395 to 415, 418 to 438, and 484 to 504; these read DGSF…LLII, IPWL…TLLF, IFQF…VEYI, MALT…MFLC, LITI…LSGY, YLLM…WLYG, PGIS…LSPA, WHLL…LIAI, MLAY…IVGD, YMLF…LFGL, ALSL…AGFF, LYLF…IGLL, and MIVC…IIAI.

The protein belongs to the complex I subunit 2 family. In terms of assembly, NDH is composed of at least 16 different subunits, 5 of which are encoded in the nucleus.

It is found in the plastid. It localises to the chloroplast thylakoid membrane. It carries out the reaction a plastoquinone + NADH + (n+1) H(+)(in) = a plastoquinol + NAD(+) + n H(+)(out). It catalyses the reaction a plastoquinone + NADPH + (n+1) H(+)(in) = a plastoquinol + NADP(+) + n H(+)(out). Functionally, NDH shuttles electrons from NAD(P)H:plastoquinone, via FMN and iron-sulfur (Fe-S) centers, to quinones in the photosynthetic chain and possibly in a chloroplast respiratory chain. The immediate electron acceptor for the enzyme in this species is believed to be plastoquinone. Couples the redox reaction to proton translocation, and thus conserves the redox energy in a proton gradient. In Silene latifolia (White campion), this protein is NAD(P)H-quinone oxidoreductase subunit 2, chloroplastic.